We begin with the raw amino-acid sequence, 163 residues long: Anaerobic nitrite reductase HB1 (163 aa).

Residues 8–157 (VFTEEQEALV…LVAAIKIEMK (150 aa)) form the Globin domain. The Homodimerization motif lies at 41–45 (EIAPS). Heme b is bound by residues Ser-51, Lys-65, His-69, Lys-99, Thr-103, and His-104. Positions 111 to 123 (DEHFEVTKFALLE) match the Homodimerization motif.

The protein belongs to the plant globin family. As to quaternary structure, homodimer. It depends on heme b as a cofactor.

The protein resides in the cytoplasm. The protein localises to the nucleus. The catalysed reaction is Fe(III)-heme b-[protein] + nitric oxide + H2O = Fe(II)-heme b-[protein] + nitrite + 2 H(+). In terms of biological role, phytoglobin that reduces nitrite to nitric oxide (NO) under anoxic conditions (e.g. during flooding or in waterlogged soil). May not function as an oxygen storage or transport protein. Has an unusually high affinity for O(2) through an hexacoordinate heme iron because of a very low dissociation constant. This is Anaerobic nitrite reductase HB1 from Gossypium hirsutum (Upland cotton).